A 465-amino-acid chain; its full sequence is Sodium-coupled neutral amino acid transporter 7 (465 aa).

11 helical membrane passes run 54–74 (AVFI…PAAF), 82–102 (AGVT…VILA), 128–148 (ICEL…LIII), 177–197 (FTIT…KEIG), 204–224 (TLSV…YIWP), 244–264 (FNAM…VPVF), 275–295 (WWGV…GTGV), 318–338 (VAVA…YPIL), 370–390 (ILQT…IPDI), 394–414 (ISLI…LCLI), and 427–447 (SWNA…FIFG).

The protein belongs to the amino acid/polyamine transporter 2 family.

The protein localises to the lysosome membrane. The protein resides in the cell projection. It is found in the axon. The enzyme catalyses L-asparagine(in) + Na(+)(in) = L-asparagine(out) + Na(+)(out). The catalysed reaction is L-glutamine(in) + Na(+)(in) = L-glutamine(out) + Na(+)(out). In terms of biological role, symporter that selectively cotransports sodium ions and amino acids, such as L-glutamine and L-asparagine from the lysosome into the cytoplasm and may participates in mTORC1 activation. The transport activity requires an acidic lysosomal lumen. The protein is Sodium-coupled neutral amino acid transporter 7 of Danio rerio (Zebrafish).